The primary structure comprises 89 residues: Small ribosomal subunit protein uS15 (89 aa).

Belongs to the universal ribosomal protein uS15 family. As to quaternary structure, part of the 30S ribosomal subunit. Forms a bridge to the 50S subunit in the 70S ribosome, contacting the 23S rRNA.

In terms of biological role, one of the primary rRNA binding proteins, it binds directly to 16S rRNA where it helps nucleate assembly of the platform of the 30S subunit by binding and bridging several RNA helices of the 16S rRNA. Functionally, forms an intersubunit bridge (bridge B4) with the 23S rRNA of the 50S subunit in the ribosome. This is Small ribosomal subunit protein uS15 from Haemophilus influenzae (strain PittGG).